The following is a 509-amino-acid chain: Maturase K (509 aa).

This sequence belongs to the intron maturase 2 family. MatK subfamily.

The protein resides in the plastid. It localises to the chloroplast. Usually encoded in the trnK tRNA gene intron. Probably assists in splicing its own and other chloroplast group II introns. This chain is Maturase K, found in Nicotiana rustica (Aztec tobacco).